Consider the following 294-residue polypeptide: N-acetylmuramic acid 6-phosphate etherase (294 aa).

In terms of domain architecture, SIS spans 54-217 (VISSFQNGGR…STASMIGIGK (164 aa)). Glutamate 82 (proton donor) is an active-site residue. Residue glutamate 113 is part of the active site.

Belongs to the GCKR-like family. MurNAc-6-P etherase subfamily. As to quaternary structure, homodimer.

It carries out the reaction N-acetyl-D-muramate 6-phosphate + H2O = N-acetyl-D-glucosamine 6-phosphate + (R)-lactate. It participates in amino-sugar metabolism; N-acetylmuramate degradation. In terms of biological role, specifically catalyzes the cleavage of the D-lactyl ether substituent of MurNAc 6-phosphate, producing GlcNAc 6-phosphate and D-lactate. The protein is N-acetylmuramic acid 6-phosphate etherase of Bacillus cytotoxicus (strain DSM 22905 / CIP 110041 / 391-98 / NVH 391-98).